The primary structure comprises 142 residues: Putative phosphatidylglycerol/phosphatidylinositol transfer protein 2 (142 aa).

An N-terminal signal peptide occupies residues 1–20 (MKFYLYLSILLILLTSTSFG).

Belongs to the NPC2 family. Monomer.

Its function is as follows. Catalyzes the intermembrane transfer of phosphatidylglycerol and phosphatidylinositol. The chain is Putative phosphatidylglycerol/phosphatidylinositol transfer protein 2 from Dictyostelium discoideum (Social amoeba).